The sequence spans 155 residues: MAKGEGNVLAQHKKARHDYHIVETVEAGIVLTGTEIKSVRAARIQLKDGFAQIKNGEAWLVNVHIAPFEQGNIWNADPERTRKLLLKKREIQHLADELKGTGMTLVPLKVYLKDGFAKVLIGLAKGKHDYDKRESIKRREQDRDIRRVMKSVNRR.

Belongs to the SmpB family.

It localises to the cytoplasm. Functionally, required for rescue of stalled ribosomes mediated by trans-translation. Binds to transfer-messenger RNA (tmRNA), required for stable association of tmRNA with ribosomes. tmRNA and SmpB together mimic tRNA shape, replacing the anticodon stem-loop with SmpB. tmRNA is encoded by the ssrA gene; the 2 termini fold to resemble tRNA(Ala) and it encodes a 'tag peptide', a short internal open reading frame. During trans-translation Ala-aminoacylated tmRNA acts like a tRNA, entering the A-site of stalled ribosomes, displacing the stalled mRNA. The ribosome then switches to translate the ORF on the tmRNA; the nascent peptide is terminated with the 'tag peptide' encoded by the tmRNA and targeted for degradation. The ribosome is freed to recommence translation, which seems to be the essential function of trans-translation. In Streptococcus equi subsp. zooepidemicus (strain H70), this protein is SsrA-binding protein.